The primary structure comprises 179 residues: Ubiquitin-conjugating enzyme E2 2 (179 aa).

The tract at residues 1–28 is disordered; sequence MSTPARRRLMRDFKRMQQDPPSGVSASP. Residues 4–150 form the UBC core domain; that stretch reads PARRRLMRDF…VRETVENSWN (147 aa). Cys-88 functions as the Glycyl thioester intermediate in the catalytic mechanism. The tract at residues 145 to 179 is disordered; sequence VENSWNDDDDEEEEEEDEDEAEDEDDDDDDNIDED. Residues 149–179 are compositionally biased toward acidic residues; that stretch reads WNDDDDEEEEEEDEDEAEDEDDDDDDNIDED. Residues 151-179 are acidic tail; it reads DDDDEEEEEEDEDEAEDEDDDDDDNIDED.

It belongs to the ubiquitin-conjugating enzyme family.

It is found in the cytoplasm. Its subcellular location is the nucleus. It catalyses the reaction S-ubiquitinyl-[E1 ubiquitin-activating enzyme]-L-cysteine + [E2 ubiquitin-conjugating enzyme]-L-cysteine = [E1 ubiquitin-activating enzyme]-L-cysteine + S-ubiquitinyl-[E2 ubiquitin-conjugating enzyme]-L-cysteine.. It functions in the pathway protein modification; protein ubiquitination. Functionally, catalyzes the covalent attachment of ubiquitin to other proteins. Plays a role in transcription regulation by catalyzing the monoubiquitination of histone H2B to form H2BK123ub1. H2BK123ub1 gives a specific tag for epigenetic transcriptional activation and is also a prerequisite for H3K4me and H3K79me formation. Also involved in postreplication repair of UV-damaged DNA, in N-end rule-dependent protein degradation and in sporulation. The chain is Ubiquitin-conjugating enzyme E2 2 (UBC2) from Candida albicans (strain SC5314 / ATCC MYA-2876) (Yeast).